Consider the following 145-residue polypeptide: 3-dehydroquinate dehydratase (145 aa).

The Proton acceptor role is filled by Y23. Residues N73, H79, and D86 each coordinate substrate. The active-site Proton donor is the H99. Substrate-binding positions include 100–101 and R110; that span reads LS.

This sequence belongs to the type-II 3-dehydroquinase family. Homododecamer.

It carries out the reaction 3-dehydroquinate = 3-dehydroshikimate + H2O. The protein operates within metabolic intermediate biosynthesis; chorismate biosynthesis; chorismate from D-erythrose 4-phosphate and phosphoenolpyruvate: step 3/7. Functionally, catalyzes a trans-dehydration via an enolate intermediate. This Desulfitobacterium hafniense (strain Y51) protein is 3-dehydroquinate dehydratase.